The primary structure comprises 231 residues: Large ribosomal subunit protein uL1 (231 aa).

The protein belongs to the universal ribosomal protein uL1 family. Part of the 50S ribosomal subunit.

In terms of biological role, binds directly to 23S rRNA. The L1 stalk is quite mobile in the ribosome, and is involved in E site tRNA release. Its function is as follows. Protein L1 is also a translational repressor protein, it controls the translation of the L11 operon by binding to its mRNA. This Chromobacterium violaceum (strain ATCC 12472 / DSM 30191 / JCM 1249 / CCUG 213 / NBRC 12614 / NCIMB 9131 / NCTC 9757 / MK) protein is Large ribosomal subunit protein uL1.